The chain runs to 86 residues: Teretoxin Tsu6.16 (86 aa).

The signal sequence occupies residues 1–21 (MATSGRLLCVCLVMGLVFESL). Positions 22–46 (GYLTGREKRPAENLEASVQRRWYLN) are excised as a propeptide.

It belongs to the teretoxin M (TM) superfamily. Contains 3 disulfide bonds. Expressed by the venom duct.

It is found in the secreted. The polypeptide is Teretoxin Tsu6.16 (Terebra subulata (Chocolate spotted auger)).